The following is a 514-amino-acid chain: Histidine ammonia-lyase (514 aa).

Residues 144-146 (ASG) constitute a cross-link (5-imidazolinone (Ala-Gly)). 2,3-didehydroalanine (Ser) is present on S145.

Belongs to the PAL/histidase family. Contains an active site 4-methylidene-imidazol-5-one (MIO), which is formed autocatalytically by cyclization and dehydration of residues Ala-Ser-Gly.

It is found in the cytoplasm. The catalysed reaction is L-histidine = trans-urocanate + NH4(+). Its pathway is amino-acid degradation; L-histidine degradation into L-glutamate; N-formimidoyl-L-glutamate from L-histidine: step 1/3. In Rhodospirillum rubrum (strain ATCC 11170 / ATH 1.1.1 / DSM 467 / LMG 4362 / NCIMB 8255 / S1), this protein is Histidine ammonia-lyase.